The sequence spans 834 residues: ATP-dependent 6-phosphofructokinase (834 aa).

Residues 1 to 426 are N-terminal catalytic PFK domain 1; sequence MTTTSKIIND…FYEIFIACSN (426 aa). ATP-binding positions include Gly62, 123–124, and 153–156; these read RS and GDGS. Position 154 (Asp154) interacts with Mg(2+). Residues 199 to 201, Arg236, 243 to 245, Glu299, Arg326, and 332 to 335 contribute to the substrate site; these read SID, MGR, and HVQR. Asp201 functions as the Proton acceptor in the catalytic mechanism. The segment at 427–437 is interdomain linker; the sequence is LHRRKVESKGM. Residues 438–834 form a C-terminal regulatory PFK domain 2 region; sequence GVLILHSGGP…DPNVNPQFTL (397 aa). Beta-D-fructose 2,6-bisphosphate is bound by residues Arg507, 566-570, Arg603, 610-612, Glu666, Arg692, 698-701, and Arg764; these read TIANN, MGA, and HLQQ. The tract at residues 799–834 is disordered; the sequence is SNLSEQDRPIKKSDISSPTSYSQKTFDPNVNPQFTL. Over residues 803-812 the composition is skewed to basic and acidic residues; that stretch reads EQDRPIKKSD. The span at 813 to 834 shows a compositional bias: polar residues; that stretch reads ISSPTSYSQKTFDPNVNPQFTL.

This sequence belongs to the phosphofructokinase type A (PFKA) family. ATP-dependent PFK group I subfamily. Eukaryotic two domain clade 'E' sub-subfamily. As to quaternary structure, homotetramer. The cofactor is Mg(2+). The N-terminus is blocked.

It localises to the cytoplasm. It catalyses the reaction beta-D-fructose 6-phosphate + ATP = beta-D-fructose 1,6-bisphosphate + ADP + H(+). It participates in carbohydrate degradation; glycolysis; D-glyceraldehyde 3-phosphate and glycerone phosphate from D-glucose: step 3/4. Allosterically activated by ADP, AMP, or fructose 2,6-bisphosphate, and allosterically inhibited by ATP or citrate. Catalyzes the phosphorylation of D-fructose 6-phosphate to fructose 1,6-bisphosphate by ATP, the first committing step of glycolysis. The sequence is that of ATP-dependent 6-phosphofructokinase (pfkA) from Dictyostelium discoideum (Social amoeba).